The following is a 398-amino-acid chain: Putative glutamate--cysteine ligase 2 (398 aa).

The protein belongs to the glutamate--cysteine ligase type 2 family. YbdK subfamily.

The catalysed reaction is L-cysteine + L-glutamate + ATP = gamma-L-glutamyl-L-cysteine + ADP + phosphate + H(+). Functionally, ATP-dependent carboxylate-amine ligase which exhibits weak glutamate--cysteine ligase activity. The sequence is that of Putative glutamate--cysteine ligase 2 from Micrococcus luteus (strain ATCC 4698 / DSM 20030 / JCM 1464 / CCM 169 / CCUG 5858 / IAM 1056 / NBRC 3333 / NCIMB 9278 / NCTC 2665 / VKM Ac-2230) (Micrococcus lysodeikticus).